The sequence spans 500 residues: Archaeal-type glutamate synthase [NADPH] (500 aa).

4Fe-4S ferredoxin-type domains lie at Ser7–Asp38 and Asp40–Asn69. [4Fe-4S] cluster-binding residues include Cys18, Cys21, Cys24, Cys28, Cys49, Cys52, Cys55, and Cys59.

This sequence belongs to the glutamate synthase family. FMN serves as cofactor.

It carries out the reaction 2 L-glutamate + NADP(+) = L-glutamine + 2-oxoglutarate + NADPH + H(+). In Dehalococcoides mccartyi (strain ATCC BAA-2266 / KCTC 15142 / 195) (Dehalococcoides ethenogenes (strain 195)), this protein is Archaeal-type glutamate synthase [NADPH].